The chain runs to 250 residues: Urease accessory protein UreG 3 (250 aa).

Positions 1–24 are disordered; that stretch reads MPDNASAQQPGQPAQGPNEHYHQP. Positions 7 to 17 are enriched in low complexity; sequence AQQPGQPAQGP. GTP is bound at residue 37-44; that stretch reads GPVGTGKS. The segment at 230–250 is disordered; it reads GTHVPTDPGPMAPHSHSHDGS.

Belongs to the SIMIBI class G3E GTPase family. UreG subfamily. As to quaternary structure, homodimer. UreD, UreF and UreG form a complex that acts as a GTP-hydrolysis-dependent molecular chaperone, activating the urease apoprotein by helping to assemble the nickel containing metallocenter of UreC. The UreE protein probably delivers the nickel.

It is found in the cytoplasm. Facilitates the functional incorporation of the urease nickel metallocenter. This process requires GTP hydrolysis, probably effectuated by UreG. This Streptomyces griseus subsp. griseus (strain JCM 4626 / CBS 651.72 / NBRC 13350 / KCC S-0626 / ISP 5235) protein is Urease accessory protein UreG 3.